Consider the following 288-residue polypeptide: Diaminopimelate epimerase (288 aa).

Asn14 and Asn67 together coordinate substrate. The active-site Proton donor is Cys76. Substrate-binding positions include 77 to 78 (GN), Asn166, Asn199, and 217 to 218 (ER). Residue Cys226 is the Proton acceptor of the active site. 227 to 228 (GT) is a substrate binding site.

This sequence belongs to the diaminopimelate epimerase family. As to quaternary structure, homodimer.

It localises to the cytoplasm. It carries out the reaction (2S,6S)-2,6-diaminopimelate = meso-2,6-diaminopimelate. It participates in amino-acid biosynthesis; L-lysine biosynthesis via DAP pathway; DL-2,6-diaminopimelate from LL-2,6-diaminopimelate: step 1/1. In terms of biological role, catalyzes the stereoinversion of LL-2,6-diaminopimelate (L,L-DAP) to meso-diaminopimelate (meso-DAP), a precursor of L-lysine and an essential component of the bacterial peptidoglycan. The polypeptide is Diaminopimelate epimerase (Bacillus thuringiensis (strain Al Hakam)).